We begin with the raw amino-acid sequence, 253 residues long: Pimeloyl-[acyl-carrier protein] methyl ester esterase (253 aa).

Substrate is bound by residues W18, 78–79 (SL), and 139–143 (FLALD). S78 (nucleophile) is an active-site residue. Residues D203 and H231 contribute to the active site. Residue H231 participates in substrate binding.

This sequence belongs to the AB hydrolase superfamily. Carboxylesterase BioH family. Monomer.

It localises to the cytoplasm. The catalysed reaction is 6-carboxyhexanoyl-[ACP] methyl ester + H2O = 6-carboxyhexanoyl-[ACP] + methanol + H(+). It functions in the pathway cofactor biosynthesis; biotin biosynthesis. Its function is as follows. The physiological role of BioH is to remove the methyl group introduced by BioC when the pimeloyl moiety is complete. It allows to synthesize pimeloyl-ACP via the fatty acid synthetic pathway through the hydrolysis of the ester bonds of pimeloyl-ACP esters. The chain is Pimeloyl-[acyl-carrier protein] methyl ester esterase from Xanthomonas oryzae pv. oryzae (strain MAFF 311018).